The following is an 879-amino-acid chain: Serine/threonine-protein kinase greatwall (879 aa).

Residue Met1 is modified to N-acetylmethionine. Residues 1-23 are disordered; it reads MDPTAGSKKEPGGGAATEEGVNR. The Protein kinase domain occupies 35-835; it reads FSIVKPISRG…MKELKRHPLF (801 aa). ATP is bound by residues 41-49 and Lys62; that span reads ISRGAFGKV. Asp156 serves as the catalytic Proton acceptor. Phosphothreonine is present on residues Thr207 and Thr222. Phosphoserine occurs at positions 293, 370, and 453. The residue at position 519 (Thr519) is a Phosphothreonine. A phosphoserine mark is found at Ser552 and Ser556. The tract at residues 566–632 is disordered; that stretch reads SMNSDSSFPG…VENPAVQESN (67 aa). Residues 589–598 show a composition bias toward basic and acidic residues; it reads DSDRSIKESS. Residues Ser631, Ser657, and Ser668 each carry the phosphoserine modification. The interval 700-728 is disordered; that stretch reads KRRSCMPHQQTPNQIKSGTPYRTPKSVRR. A compositionally biased stretch (polar residues) spans 706–716; that stretch reads PHQQTPNQIKS. Position 722 is a phosphothreonine (Thr722). A Phosphoserine modification is found at Ser725. A Phosphothreonine modification is found at Thr741. Residues 836 to 879 form the AGC-kinase C-terminal domain; that stretch reads SDVDWENLQHQTMPFIPQPDDETDTSYFEARNTAQHLTVSGFSL. Phosphoserine occurs at positions 875 and 878.

The protein belongs to the protein kinase superfamily. AGC Ser/Thr protein kinase family. Post-translationally, phosphorylation at Thr-741 by CDK1 during M phase activates its kinase activity. Maximum phosphorylation occurs in prometaphase.

It is found in the cytoplasm. The protein localises to the cytoskeleton. The protein resides in the microtubule organizing center. It localises to the centrosome. Its subcellular location is the nucleus. It is found in the cleavage furrow. The catalysed reaction is L-seryl-[protein] + ATP = O-phospho-L-seryl-[protein] + ADP + H(+). The enzyme catalyses L-threonyl-[protein] + ATP = O-phospho-L-threonyl-[protein] + ADP + H(+). Serine/threonine kinase that plays a key role in M phase by acting as a regulator of mitosis entry and maintenance. Acts by promoting the inactivation of protein phosphatase 2A (PP2A) during M phase: does not directly inhibit PP2A but acts by mediating phosphorylation and subsequent activation of ARPP19 and ENSA at 'Ser-62' and 'Ser-67', respectively. ARPP19 and ENSA are phosphatase inhibitors that specifically inhibit the PPP2R2D (PR55-delta) subunit of PP2A. Inactivation of PP2A during M phase is essential to keep cyclin-B1-CDK1 activity high. Following DNA damage, it is also involved in checkpoint recovery by being inhibited. Phosphorylates histone protein in vitro; however such activity is unsure in vivo. May be involved in megakaryocyte differentiation. This chain is Serine/threonine-protein kinase greatwall (MASTL), found in Homo sapiens (Human).